Reading from the N-terminus, the 362-residue chain is Snurportin-1 (362 aa).

The residue at position 1 (methionine 1) is an N-acetylmethionine. Disordered stretches follow at residues methionine 1–glutamine 40 and aspartate 69–aspartate 90. Residues methionine 1 to leucine 65 form a necessary for interaction with KPNB1 and m3G-cap U1 and U5 snRNP import receptor activity region. The interval methionine 1–glycine 160 is necessary for interaction with XPO1. The region spanning serine 11 to methionine 73 is the IBB domain. Over residues phenylalanine 12–alanine 22 the composition is skewed to polar residues. The segment covering aspartate 69 to valine 89 has biased composition (acidic residues). The residue at position 75 (serine 75) is a Phosphoserine. Residues glycine 128 to arginine 130 form an interaction with m3G-cap structure region. The tract at residues leucine 210 to alanine 330 is necessary for binding to the m3G-cap structure. Positions lysine 319 to asparagine 362 are disordered. The span at glutamate 332–serine 342 shows a compositional bias: basic and acidic residues.

It belongs to the snurportin family. In terms of assembly, component of an import snRNP complex composed of KPNB1, SNUPN, SMN1 and ZNF259. Component of a nuclear export receptor complex composed of KPNB1, Ran, SNUPN and XPO1. Found in a trimeric export complex with SNUPN, Ran and XPO1. Interacts (via IBB domain) with KPNB1; the interaction is direct. Interacts with DDX20, IPO7, SMN1, SNRPB and XPO1. Interacts directly with XPO1. Its interaction with XPO1 and binding to m3G-cap U snRNPs appears to be mutually exclusive. Can form homomers.

It is found in the nucleus. The protein resides in the cytoplasm. Its function is as follows. Functions as an U snRNP-specific nuclear import adapter. Involved in the trimethylguanosine (m3G)-cap-dependent nuclear import of U snRNPs. Binds specifically to the terminal m3G-cap U snRNAs. This is Snurportin-1 (SNUPN) from Bos taurus (Bovine).